The sequence spans 1468 residues: Neuropathy target esterase sws (1468 aa).

Residues 1–34 lie on the Lumenal side of the membrane; the sequence is MDVLEMLRASASGSYNTIFSDAWCQYVSKQITAT. A helical transmembrane segment spans residues 35-55; sequence VYMYCALVMMSLLFIAWFLYF. The Cytoplasmic segment spans residues 56–1468; it reads KRMARLRLRD…RSSPNNETKN (1413 aa). 174-301 provides a ligand contact to a nucleoside 3',5'-cyclic phosphate; sequence IFGHFEKPVF…IRVIQVIMIR (128 aa). 2 stretches are compositionally biased toward polar residues: residues 332-348 and 357-366; these read TMSGPINSQTSQSSRQA and NQLNLMQSAA. The tract at residues 332 to 411 is disordered; that stretch reads TMSGPINSQT…DGSFHGTTNL (80 aa). 2 positions are modified to phosphoserine: Ser442 and Ser451. A nucleoside 3',5'-cyclic phosphate is bound by residues 480–607 and 596–723; these read ELGL…VVRR and IVLD…LSHR. Residues 950-1116 enclose the PNPLA domain; that stretch reads LVLGGGGARG…VNNLPGHLWR (167 aa). Positions 954 to 959 match the GXGXXG motif; that stretch reads GGGARG. The GXSXG signature appears at 981–985; that stretch reads GVSIG. The active-site Nucleophile is the Ser983. Residue Asp1103 is the Proton acceptor of the active site. The short motif at 1103–1105 is the DGA/G element; it reads DGG. At Ser1197 the chain carries Phosphoserine. Residues 1368–1468 are disordered; that stretch reads ERKMDKSTQS…RSSPNNETKN (101 aa). The segment covering 1374-1383 has biased composition (low complexity); it reads STQSSPPTSS. The span at 1385 to 1395 shows a compositional bias: basic and acidic residues; it reads TDMRGKEEAKH. A compositionally biased stretch (low complexity) spans 1419–1441; sequence TQTGQEQELQQQQKLQQLQQDQG. Over residues 1446–1459 the composition is skewed to basic and acidic residues; sequence QLVDKDKEEDKENR.

The protein belongs to the NTE family. As to quaternary structure, interacts with Pka-C3; interaction inhibits the catalytic function of Pka-C3 and the esterase activity of sws.

It is found in the endoplasmic reticulum membrane. It carries out the reaction a 1-acyl-sn-glycero-3-phosphocholine + H2O = sn-glycerol 3-phosphocholine + a fatty acid + H(+). In terms of biological role, phospholipase B that deacylates intracellular phosphatidylcholine (PtdCho), generating glycerophosphocholine (GroPtdCho). This deacylation occurs at both sn-2 and sn-1 positions of PtdCho. Its specific chemical modification by certain organophosphorus (OP) compounds leads to distal axonopathy. Plays a role in the signaling mechanism between neurons and glia that regulates glia wrapping during development of the adult brain. Essential for membrane lipid homeostasis and cell survival in both neurons and glia of the adult brain. The sequence is that of Neuropathy target esterase sws from Drosophila sechellia (Fruit fly).